Here is a 198-residue protein sequence, read N- to C-terminus: Glycerol-3-phosphate acyltransferase (198 aa).

5 helical membrane-spanning segments follow: residues 6–26 (FLPVALIIGYLFGSIPFGLIL), 55–75 (GLAAGTLLGDALKGTAAVIIS), 83–103 (AAMIAGLGAFLGHLFPVWLKF), 113–133 (IGILIGLFWPGAIFFCLVWLA), and 154–174 (IVLWAFGHTALAALFALLTLL).

The protein belongs to the PlsY family. Probably interacts with PlsX.

The protein localises to the cell inner membrane. The catalysed reaction is an acyl phosphate + sn-glycerol 3-phosphate = a 1-acyl-sn-glycero-3-phosphate + phosphate. Its pathway is lipid metabolism; phospholipid metabolism. Functionally, catalyzes the transfer of an acyl group from acyl-phosphate (acyl-PO(4)) to glycerol-3-phosphate (G3P) to form lysophosphatidic acid (LPA). This enzyme utilizes acyl-phosphate as fatty acyl donor, but not acyl-CoA or acyl-ACP. The protein is Glycerol-3-phosphate acyltransferase of Bradyrhizobium sp. (strain BTAi1 / ATCC BAA-1182).